The following is a 413-amino-acid chain: Histidinol-phosphate aminotransferase, chloroplastic (413 aa).

Residues 1–35 (MGVIELCNTSSICIGRAKPSCCSIERNQRRRIICM) constitute a chloroplast transit peptide. K273 is modified (N6-(pyridoxal phosphate)lysine).

This sequence belongs to the class-II pyridoxal-phosphate-dependent aminotransferase family. Histidinol-phosphate aminotransferase subfamily. Homodimer. Pyridoxal 5'-phosphate is required as a cofactor. Mainly expressed in green tissues.

It localises to the plastid. The protein localises to the chloroplast. The catalysed reaction is L-histidinol phosphate + 2-oxoglutarate = 3-(imidazol-4-yl)-2-oxopropyl phosphate + L-glutamate. Its pathway is amino-acid biosynthesis; L-histidine biosynthesis; L-histidine from 5-phospho-alpha-D-ribose 1-diphosphate: step 7/9. The sequence is that of Histidinol-phosphate aminotransferase, chloroplastic (HPA) from Nicotiana tabacum (Common tobacco).